A 126-amino-acid chain; its full sequence is Fluoride-specific ion channel FluC (126 aa).

4 consecutive transmembrane segments (helical) span residues 3-23 (LSIL…WFLG), 35-55 (LGTL…VAYF), 68-88 (FIIT…AEVV), and 103-123 (IAIH…TVAV). Na(+) contacts are provided by G75 and S78.

The protein belongs to the fluoride channel Fluc/FEX (TC 1.A.43) family.

Its subcellular location is the cell inner membrane. It catalyses the reaction fluoride(in) = fluoride(out). Na(+) is not transported, but it plays an essential structural role and its presence is essential for fluoride channel function. Fluoride-specific ion channel. Important for reducing fluoride concentration in the cell, thus reducing its toxicity. The protein is Fluoride-specific ion channel FluC of Paraburkholderia phymatum (strain DSM 17167 / CIP 108236 / LMG 21445 / STM815) (Burkholderia phymatum).